Consider the following 968-residue polypeptide: Alanine--tRNA ligase, cytoplasmic (968 aa).

Residues Arg-77, His-95, Trp-176, and Ile-214 to Asn-216 contribute to the ATP site. 2 residues coordinate L-alanine: Asn-216 and Asp-239. Gly-243 contributes to the ATP binding site. Zn(2+)-binding residues include His-606, His-610, Cys-724, and His-728.

The protein belongs to the class-II aminoacyl-tRNA synthetase family. In terms of assembly, monomer. The cofactor is Zn(2+).

It localises to the cytoplasm. It carries out the reaction tRNA(Ala) + L-alanine + ATP = L-alanyl-tRNA(Ala) + AMP + diphosphate. Its function is as follows. Catalyzes the attachment of alanine to tRNA(Ala) in a two-step reaction: alanine is first activated by ATP to form Ala-AMP and then transferred to the acceptor end of tRNA(Ala). Also edits incorrectly charged tRNA(Ala) via its editing domain. The protein is Alanine--tRNA ligase, cytoplasmic of Caenorhabditis elegans.